The sequence spans 206 residues: Small ribosomal subunit protein uS4 (206 aa).

The region spanning 96–156 is the S4 RNA-binding domain; the sequence is GRLDNVVYRM…EKSKKQSRIK (61 aa).

The protein belongs to the universal ribosomal protein uS4 family. As to quaternary structure, part of the 30S ribosomal subunit. Contacts protein S5. The interaction surface between S4 and S5 is involved in control of translational fidelity.

In terms of biological role, one of the primary rRNA binding proteins, it binds directly to 16S rRNA where it nucleates assembly of the body of the 30S subunit. Its function is as follows. With S5 and S12 plays an important role in translational accuracy. The protein is Small ribosomal subunit protein uS4 of Photorhabdus laumondii subsp. laumondii (strain DSM 15139 / CIP 105565 / TT01) (Photorhabdus luminescens subsp. laumondii).